Here is a 262-residue protein sequence, read N- to C-terminus: Abhydrolase domain-containing protein AFT2-1 (262 aa).

The Peroxisomal targeting signal type 1 signature appears at 260-262 (SKL).

This sequence belongs to the AB hydrolase superfamily. AKT2 hydrolase family.

The protein resides in the peroxisome. It participates in mycotoxin biosynthesis. In terms of biological role, abhydrolase domain-containing protein; part of the gene clusters that mediate the biosynthesis of the host-selective toxins (HSTs) AF-toxins responsible for Alternaria black spot of strawberry disease by the strawberry pathotype. AF-toxin I and III are valine derivatives of 2,3-dyhydroxy-isovaleric acid and 2-hydroxy-isovaleric acid respectively, while AF II is an isoleucine derivative of 2-hydroxy-valeric acid. These derivatives are bound to a 9,10-epoxy-8-hydroxy-9-methyl-decatrienoic acid (EDA) moiety. On cellular level, AF-toxins affect plasma membrane of susceptible cells and cause a sudden increase in loss of K(+) after a few minutes of toxin treatment. The aldo-keto reductase AFTS1 catalyzes the conversion of 2-keto-isovaleric acid (2-KIV) to 2-hydroxy-isovaleric acid (2-HIV) by reduction of its ketone to an alcohol. The acyl-CoA ligase AFT1, the hydrolase AFT2 and the enoyl-CoA hydratases AFT3 and AFT6, but also the polyketide synthase AFT9, the acyl-CoA dehydrogenase AFT10, the cytochrome P450 monooxygenase AFT11 and the oxidoreductase AFT12 are all involved in the biosynthesis of the AK-, AF- and ACT-toxin common EDA structural moiety. The exact function of each enzyme, and of additional enzymes identified within the AF-toxin clusters have still to be determined. In Alternaria alternata (Alternaria rot fungus), this protein is Abhydrolase domain-containing protein AFT2-1.